The sequence spans 122 residues: Large ribosomal subunit protein bL19 (122 aa).

This sequence belongs to the bacterial ribosomal protein bL19 family.

Functionally, this protein is located at the 30S-50S ribosomal subunit interface and may play a role in the structure and function of the aminoacyl-tRNA binding site. This is Large ribosomal subunit protein bL19 from Chlamydia abortus (strain DSM 27085 / S26/3) (Chlamydophila abortus).